Consider the following 513-residue polypeptide: Putative BTB/POZ domain-containing protein L55 (513 aa).

The BTB domain maps to 11 to 83; that stretch reads SPIKIILQDI…FHGYKMEISD (73 aa).

It belongs to the mimivirus BTB/WD family.

This Acanthamoeba polyphaga (Amoeba) protein is Putative BTB/POZ domain-containing protein L55.